A 396-amino-acid polypeptide reads, in one-letter code: S-arrestin (396 aa).

Belongs to the arrestin family.

Its function is as follows. Arrestin is one of the major proteins of the ros (retinal rod outer segments); it binds to photoactivated-phosphorylated rhodopsin, thereby apparently preventing the transducin-mediated activation of phosphodiesterase. The sequence is that of S-arrestin from Lithobates pipiens (Northern leopard frog).